A 169-amino-acid polypeptide reads, in one-letter code: Large ribosomal subunit protein bL17 (169 aa).

The disordered stretch occupies residues 124–169 (EKAVKRQDRSRRVKGSKKAIDEKTSDDSASVEAAPAAPEAEEKKDA). Over residues 131–140 (DRSRRVKGSK) the composition is skewed to basic residues. Low complexity predominate over residues 150-161 (DSASVEAAPAAP).

The protein belongs to the bacterial ribosomal protein bL17 family. As to quaternary structure, part of the 50S ribosomal subunit. Contacts protein L32.

This is Large ribosomal subunit protein bL17 from Chloroherpeton thalassium (strain ATCC 35110 / GB-78).